The primary structure comprises 312 residues: Pyridoxal kinase (312 aa).

Residue Met-1 is modified to N-acetylmethionine. 2 residues coordinate pyridoxal: Ser-12 and Thr-47. Thr-47 serves as a coordination point for pyridoxal 5'-phosphate. Position 59 is a phosphoserine (Ser-59). Asp-113 contributes to the ATP binding site. Asp-113 is a Na(+) binding site. A Mg(2+)-binding site is contributed by Asp-118. Thr-148 contributes to the Na(+) binding site. An ATP-binding site is contributed by 150–153; the sequence is NQFE. Ser-164 is modified (phosphoserine). Residue Thr-186 coordinates Na(+). Position 186–187 (186–187) interacts with ATP; the sequence is TS. At Ser-213 the chain carries Phosphoserine. ATP is bound by residues 226–228 and Thr-233; that span reads VDP. A pyridoxal 5'-phosphate-binding site is contributed by 234 to 235; the sequence is GD. Asp-235 (proton acceptor) is an active-site residue. At Ser-285 the chain carries Phosphoserine.

This sequence belongs to the pyridoxine kinase family. In terms of assembly, homodimer. Requires Zn(2+) as cofactor. It depends on Mg(2+) as a cofactor.

Its subcellular location is the cytoplasm. It is found in the cytosol. The enzyme catalyses pyridoxal + ATP = pyridoxal 5'-phosphate + ADP + H(+). The catalysed reaction is pyridoxamine + ATP = pyridoxamine 5'-phosphate + ADP + H(+). It carries out the reaction pyridoxine + ATP = pyridoxine 5'-phosphate + ADP + H(+). The protein operates within cofactor metabolism; pyridoxal 5'-phosphate salvage; pyridoxal 5'-phosphate from pyridoxal: step 1/1. It participates in cofactor metabolism; pyridoxal 5'-phosphate salvage; pyridoxine 5'-phosphate from pyridoxine: step 1/1. Its pathway is cofactor metabolism; pyridoxal 5'-phosphate salvage; pyridoxamine 5'-phosphate from pyridoxamine: step 1/1. Activity is increased in the presence of K(+)or Na(+). Catalyzes the phosphorylation of the dietary vitamin B6 vitamers pyridoxal (PL), pyridoxine (PN) and pyridoxamine (PM) to form pyridoxal 5'-phosphate (PLP), pyridoxine 5'-phosphate (PNP) and pyridoxamine 5'-phosphate (PMP), respectively. PLP is the active form of vitamin B6, and acts as a cofactor for over 140 different enzymatic reactions. The protein is Pyridoxal kinase (Pdxk) of Rattus norvegicus (Rat).